The sequence spans 102 residues: MASQQIRIRLKSYEHGILDESAAKIVATAERTGAQISGPVPLPTERTLFTVLRSPHKNKDSREQFEIRTHKRLIDILNPTPKTVDSLMKLDLPSGVDIEIKL.

This sequence belongs to the universal ribosomal protein uS10 family. Part of the 30S ribosomal subunit.

Involved in the binding of tRNA to the ribosomes. The sequence is that of Small ribosomal subunit protein uS10 from Lactobacillus gasseri (strain ATCC 33323 / DSM 20243 / BCRC 14619 / CIP 102991 / JCM 1131 / KCTC 3163 / NCIMB 11718 / NCTC 13722 / AM63).